The following is a 308-amino-acid chain: Ribosomal RNA large subunit methyltransferase F (308 aa).

The protein belongs to the methyltransferase superfamily. METTL16/RlmF family.

It is found in the cytoplasm. It carries out the reaction adenosine(1618) in 23S rRNA + S-adenosyl-L-methionine = N(6)-methyladenosine(1618) in 23S rRNA + S-adenosyl-L-homocysteine + H(+). Functionally, specifically methylates the adenine in position 1618 of 23S rRNA. The protein is Ribosomal RNA large subunit methyltransferase F of Escherichia coli (strain K12 / MC4100 / BW2952).